Consider the following 307-residue polypeptide: Barttin (307 aa).

Residues 1–5 (MADEK) lie on the Cytoplasmic side of the membrane. The interval 1 to 72 (MADEKTFRIG…VPADSDFQGI (72 aa)) is regulates channel membrane trafficking and anion conductance. The helical transmembrane segment at 6 to 26 (TFRIGFIVLGLFLLSLGTFLM) threads the bilayer. The Extracellular segment spans residues 27-32 (SHDRPQ). A helical transmembrane segment spans residues 33–53 (VYGTFYAMGSVMVIGGVIWSM). S-palmitoyl cysteine attachment occurs at residues Cys-54 and Cys-56. At 54–307 (CQCYPKITFV…ELGFEPDIQG (254 aa)) the chain is on the cytoplasmic side. 2 positions are modified to phosphoserine: Ser-79 and Ser-107. Disordered stretches follow at residues 135 to 154 (TGAS…WMEA) and 161 to 224 (GSDE…RGPL). The span at 161–171 (GSDENEGEKSH) shows a compositional bias: basic and acidic residues. Ser-162 is modified (phosphoserine). Over residues 172–183 (SQSSPSVGPQGS) the composition is skewed to low complexity. Polar residues predominate over residues 198-207 (SEGSSLQPSP). Phosphoserine is present on residues Ser-228 and Ser-289. The segment at 255-307 (RKQQWSLRMKGETVQARAEEPEQEEEDLYYGLPDSPGNPLPDKELGFEPDIQG) is disordered.

In terms of assembly, interacts with CLCNK channels. Forms probably heteromers with CLCNKA in the thin ascending limb of Henle and with CLCNKB in the thick ascending limb and more distal segments. In terms of processing, palmitoylation is necessary for activation of plasma membrane-inserted CLC-K/barttin channels. As to expression, expression is evident in inner and outer stripes of the outer medulla of the kidney, most probably representing thin limbs of Henle's loop together with some collecting duct coursing through the outer stripe. In situ hybridization in fetal kidney at 18.5 dpc revealed a clear continuity between hybridization signals from the thin limb of Henle's loop and the distal convoluted tubule, suggesting that part of the expression pattern may result from expression in the thick ascending limb of Henle's loop. In addition, strong signals are present in a subset of cortical tubules, representing distal convoluted tubules or cortical collecting duct. Strong expression is also observed in the inner medulla of the kidney. This expression does not extend all the way to the tip of the papilla. Thus this signal most probably represents cells of the thin ascending limbs. In the inner ear, strong and exclusive expression is detected in marginal cells of the stria vascularis. In addition to cochlear signal, expression is observed in dark cells localized at the base of the crista ampullaris of the vestibular organ.

The protein localises to the basolateral cell membrane. Regulatory subunit of anion-selective CLCNKA:BSND and CLCNKB:BSND heteromeric channels involved in basolateral chloride conductance along the nephron to achieve urine concentration and maintain systemic acid-base homeostasis, and in the stria vascularis of the inner ear to establish the endocochlear potential necessary for normal hearing. Most likely acts as a chaperone that allosterically regulates proper sorting of CLCNKA:BSND and CLCNKB:BSND channels at the basolateral plasma membrane domain and functional switch to ion conducting state. Mediates constitutive opening of channel common gates. The chain is Barttin from Mus musculus (Mouse).